The primary structure comprises 319 residues: Thymidylate synthase (319 aa).

Residues arginine 25 and 181-182 (RR) contribute to the dUMP site. Cysteine 201 acts as the Nucleophile in catalysis. DUMP contacts are provided by residues 221 to 224 (RSAD), asparagine 232, and 262 to 264 (HIY). Residue aspartate 224 coordinates (6R)-5,10-methylene-5,6,7,8-tetrahydrofolate. Alanine 318 serves as a coordination point for (6R)-5,10-methylene-5,6,7,8-tetrahydrofolate.

Belongs to the thymidylate synthase family. Bacterial-type ThyA subfamily. Homodimer.

It is found in the cytoplasm. It carries out the reaction dUMP + (6R)-5,10-methylene-5,6,7,8-tetrahydrofolate = 7,8-dihydrofolate + dTMP. It functions in the pathway pyrimidine metabolism; dTTP biosynthesis. Catalyzes the reductive methylation of 2'-deoxyuridine-5'-monophosphate (dUMP) to 2'-deoxythymidine-5'-monophosphate (dTMP) while utilizing 5,10-methylenetetrahydrofolate (mTHF) as the methyl donor and reductant in the reaction, yielding dihydrofolate (DHF) as a by-product. This enzymatic reaction provides an intracellular de novo source of dTMP, an essential precursor for DNA biosynthesis. The sequence is that of Thymidylate synthase from Oenococcus oeni (strain ATCC BAA-331 / PSU-1).